A 359-amino-acid polypeptide reads, in one-letter code: Homoserine dehydrogenase (359 aa).

Residues A13, V15, V16, and A41 each contribute to the NAD(+) site. V16 contributes to the NADP(+) binding site. V16 contacts NADPH. Residues K60, T93, S94, and K117 each coordinate NADPH. Residue T93 participates in NAD(+) binding. T93 is a binding site for NADP(+). K117 provides a ligand contact to NADP(+). Na(+) contacts are provided by E143, V146, A148, and L150. Positions 205 and 208 each coordinate NADP(+). The L-homoserine site is built by E208 and D219. K223 (proton donor) is an active-site residue. A Glycyl lysine isopeptide (Lys-Gly) (interchain with G-Cter in ubiquitin) cross-link involves residue K290. G340 is an NAD(+) binding site. G340 provides a ligand contact to NADP(+). G340 lines the NADPH pocket.

Belongs to the homoserine dehydrogenase family. Homodimer. The cofactor is a metal cation.

The catalysed reaction is L-homoserine + NADP(+) = L-aspartate 4-semialdehyde + NADPH + H(+). The enzyme catalyses L-homoserine + NAD(+) = L-aspartate 4-semialdehyde + NADH + H(+). It participates in amino-acid biosynthesis; L-methionine biosynthesis via de novo pathway; L-homoserine from L-aspartate: step 3/3. It functions in the pathway amino-acid biosynthesis; L-threonine biosynthesis; L-threonine from L-aspartate: step 3/5. Catalyzes the conversion of L-aspartate-beta-semialdehyde (L-Asa) to L-homoserine (L-Hse), the third step in the biosynthesis of amino acids that derive from aspartate (the aspartate family of amino acids), including methioinine and threonine, the latter of which is a precursor to isoleucine; production of homoserine leads to a branch-point in the pathway as it can either be O-phosphorylated for processing to threonine, or O-acylated for processing to methionine. The chain is Homoserine dehydrogenase (HOM6) from Saccharomyces cerevisiae (strain ATCC 204508 / S288c) (Baker's yeast).